The following is a 51-amino-acid chain: MARNKPLAKKLRLAKAAKQNRRVPVWVIVKTNRKVMTHPKRRHWRRTKLKE.

Belongs to the eukaryotic ribosomal protein eL39 family.

In Thermococcus gammatolerans (strain DSM 15229 / JCM 11827 / EJ3), this protein is Large ribosomal subunit protein eL39.